A 188-amino-acid chain; its full sequence is dCTP deaminase (188 aa).

DCTP contacts are provided by residues 111–116 (KSTYAR), 135–137 (TLE), Q156, Y170, and Q180. The Proton donor/acceptor role is filled by E137.

This sequence belongs to the dCTP deaminase family. Homotrimer.

It carries out the reaction dCTP + H2O + H(+) = dUTP + NH4(+). Its pathway is pyrimidine metabolism; dUMP biosynthesis; dUMP from dCTP (dUTP route): step 1/2. Catalyzes the deamination of dCTP to dUTP. This chain is dCTP deaminase, found in Azoarcus sp. (strain BH72).